The primary structure comprises 284 residues: Tropomyosin beta chain (284 aa).

Position 1 is an N-acetylmethionine (M1). The disordered stretch occupies residues 1–65 (MDAIKKKMQM…EVEKYSESVK (65 aa)). Residues 1–284 (MDAIKKKMQM…DNALNDITSL (284 aa)) adopt a coiled-coil conformation. Basic and acidic residues-rich tracts occupy residues 12–40 (KLDK…KQLE) and 51–65 (KGTE…ESVK). Position 53 is a phosphothreonine (T53). At S61 the chain carries Phosphoserine; by PIK3CG. At T79 the chain carries Phosphothreonine. At S87 the chain carries Phosphoserine. T108 bears the Phosphothreonine mark. The tract at residues 117–136 (EKAADESERGMKVIENRAMK) is disordered. 3 positions are modified to phosphoserine: S158, S206, and S215. T252 is modified (phosphothreonine). Residue Y261 is modified to Phosphotyrosine. S271 is modified (phosphoserine). Phosphothreonine is present on T282. The residue at position 283 (S283) is a Phosphoserine.

This sequence belongs to the tropomyosin family. As to quaternary structure, homodimer. Heterodimer of an alpha (TPM1, TPM3 or TPM4) and a beta (TPM2) chain. In terms of processing, phosphorylated on Ser-61 by PIK3CG. Phosphorylation on Ser-61 is required for ADRB2 internalization. As to expression, present in primary breast cancer tissue, absent from normal breast tissue.

The protein resides in the cytoplasm. The protein localises to the cytoskeleton. Binds to actin filaments in muscle and non-muscle cells. Plays a central role, in association with the troponin complex, in the calcium dependent regulation of vertebrate striated muscle contraction. Smooth muscle contraction is regulated by interaction with caldesmon. In non-muscle cells is implicated in stabilizing cytoskeleton actin filaments. The non-muscle isoform may have a role in agonist-mediated receptor internalization. The sequence is that of Tropomyosin beta chain (TPM2) from Homo sapiens (Human).